Here is a 387-residue protein sequence, read N- to C-terminus: (S)-8-oxocitronellyl enol synthase (387 aa).

Residues 36–38 (TGI), 64–65 (RR), 82–83 (DI), 106–107 (SW), and Gln-140 each bind NADP(+). Residues Lys-144 and Tyr-177 contribute to the active site. Substrate-binding residues include Lys-144 and Tyr-177. Residues Tyr-177 and 211 to 213 (SMM) contribute to the NADP(+) site.

It belongs to the short-chain dehydrogenases/reductases (SDR) family. Highly divergent. As to expression, expressed in leaves.

It carries out the reaction (S)-8-oxocitronellyl enol + NADP(+) = (6E)-8-oxogeranial + NADPH + H(+). It catalyses the reaction (S)-8-oxocitronellyl enol + NAD(+) = (6E)-8-oxogeranial + NADH + H(+). The catalysed reaction is (R)-8-oxocitronellyl enol + NADP(+) = (6E)-8-oxogeranial + NADPH + H(+). Functionally, iridoid synthase that catalyzes the first step in generation of the iridoid ring scaffold using the linear monoterpene (6E)-8-oxogeranial as substrate. Reduces 8-oxogeranial, generating an unstable product that is subsequently cyclized into several possible products, either non-enzymically or by dedicated cyclases. Iridoids comprise a large family of distinctive bicyclic monoterpenes that possess a wide range of pharmacological activities, including anticancer, anti-inflammatory, antifungal and antibacterial activities. This is (S)-8-oxocitronellyl enol synthase from Antirrhinum majus (Garden snapdragon).